The primary structure comprises 53 residues: UPF0391 membrane protein BURPS1106A_A2993 (53 aa).

Helical transmembrane passes span 5–25 (ALIFFIIAIIAAVLGFGGIAA) and 30–50 (IAKILFYIFVVIFLVTLVLGV).

This sequence belongs to the UPF0391 family.

Its subcellular location is the cell membrane. In Burkholderia pseudomallei (strain 1106a), this protein is UPF0391 membrane protein BURPS1106A_A2993.